Here is a 98-residue protein sequence, read N- to C-terminus: UPF0251 protein Sputw3181_3483 (98 aa).

Belongs to the UPF0251 family.

The protein is UPF0251 protein Sputw3181_3483 of Shewanella sp. (strain W3-18-1).